Reading from the N-terminus, the 421-residue chain is 5-hydroxytryptamine receptor 2 (421 aa).

The Extracellular segment spans residues 1–21 (MLCGRLRHTMNSTTCFFSHRT). N-linked (GlcNAc...) asparagine glycosylation is present at asparagine 11. Residues 22–42 (VLIGIVGSLIIAVSVVGNVLV) traverse the membrane as a helical segment. Residues 43-59 (CLAIFTEPILSHSKSKF) are Cytoplasmic-facing. The chain crosses the membrane as a helical span at residues 60–79 (FIVSLAVADLLLALLVMTFA). The Extracellular segment spans residues 80 to 95 (LVNSLYGYWLFGETFC). Cysteine 95 and cysteine 210 are oxidised to a cystine. Residues 96-118 (FIWMSADVMCETASIFSICVISY) form a helical membrane-spanning segment. Over 119–138 (NRLKQVQKPLQYEEFMTTTR) the chain is Cytoplasmic. Residues 139–160 (ALLIIASLWICSFVVSFVPFFL) traverse the membrane as a helical segment. The Extracellular segment spans residues 161–213 (EWHELSMEEIKTIFKDLISDKVKTSDAHTFSFALEQTLGDNRTSNPKPECLFD). A helical membrane pass occupies residues 214 to 234 (VHFIYSVIYSLFCFYIPCTLM). At 235 to 274 (LRNYLRLFLIAKKHHVRIKNLHRLHRNQGTQGSKAARTLT) the chain is on the cytoplasmic side. The chain crosses the membrane as a helical span at residues 275 to 295 (IITGTFLACWLPFFIINPIEA). At 296–304 (VDEHLIPLE) the chain is on the extracellular side. Residues 305–325 (CFMVTIWLGYFNSCVNPIIYG) form a helical membrane-spanning segment. At 326–421 (TSNSKFRAAF…MLSESDTVFS (96 aa)) the chain is on the cytoplasmic side.

It belongs to the G-protein coupled receptor 1 family. Central nervous system.

Its subcellular location is the cell membrane. In terms of biological role, this is one of the several different receptors for 5-hydroxytryptamine (serotonin). 5-HT plays important roles in various behavioral and physiological processes in aplysia. These include feeding, locomotion, circadian rhythm, learning and memory, synaptic plasticity, and synaptic growth. This receptor is mediated by G proteins that stimulate phospholipase C. This Aplysia californica (California sea hare) protein is 5-hydroxytryptamine receptor 2 (5HTB2).